Here is a 118-residue protein sequence, read N- to C-terminus: Large ribosomal subunit protein bL20 (118 aa).

It belongs to the bacterial ribosomal protein bL20 family.

In terms of biological role, binds directly to 23S ribosomal RNA and is necessary for the in vitro assembly process of the 50S ribosomal subunit. It is not involved in the protein synthesizing functions of that subunit. The chain is Large ribosomal subunit protein bL20 from Rhodopirellula baltica (strain DSM 10527 / NCIMB 13988 / SH1).